The primary structure comprises 207 residues: Urease accessory protein UreG (207 aa).

14-21 contacts GTP; sequence GPVGSGKT.

Belongs to the SIMIBI class G3E GTPase family. UreG subfamily. In terms of assembly, homodimer. UreD, UreF and UreG form a complex that acts as a GTP-hydrolysis-dependent molecular chaperone, activating the urease apoprotein by helping to assemble the nickel containing metallocenter of UreC. The UreE protein probably delivers the nickel.

The protein resides in the cytoplasm. Its function is as follows. Facilitates the functional incorporation of the urease nickel metallocenter. This process requires GTP hydrolysis, probably effectuated by UreG. The polypeptide is Urease accessory protein UreG (Pseudomonas entomophila (strain L48)).